Reading from the N-terminus, the 92-residue chain is PqqA binding protein (92 aa).

The protein belongs to the PqqD family. Monomer. Interacts with PqqE.

It participates in cofactor biosynthesis; pyrroloquinoline quinone biosynthesis. Functionally, functions as a PqqA binding protein and presents PqqA to PqqE, in the pyrroloquinoline quinone (PQQ) biosynthetic pathway. This Xanthomonas axonopodis pv. citri (strain 306) protein is PqqA binding protein.